A 519-amino-acid chain; its full sequence is uncharacterized protein (519 aa).

The next 4 helical transmembrane spans lie at 141–161 (GSSLLPYGAGAASCFGAANVF), 202–222 (LGETHLVGLGAIGHGALWALA), 385–405 (FVVRVATAMGVPFEPLAPFVG), and 433–453 (TVVPMAFQSALAGIMLAAELV).

The protein resides in the cell membrane. This is an uncharacterized protein from Sinorhizobium fredii (strain NBRC 101917 / NGR234).